We begin with the raw amino-acid sequence, 175 residues long: Protein-export protein SecB (175 aa).

Residues 153–163 (QQQPDAANGND) are compositionally biased toward polar residues. The disordered stretch occupies residues 153-175 (QQQPDAANGNDSGIILPPGATRQ).

The protein belongs to the SecB family. In terms of assembly, homotetramer, a dimer of dimers. One homotetramer interacts with 1 SecA dimer.

Its subcellular location is the cytoplasm. In terms of biological role, one of the proteins required for the normal export of preproteins out of the cell cytoplasm. It is a molecular chaperone that binds to a subset of precursor proteins, maintaining them in a translocation-competent state. It also specifically binds to its receptor SecA. The chain is Protein-export protein SecB from Bordetella bronchiseptica (strain ATCC BAA-588 / NCTC 13252 / RB50) (Alcaligenes bronchisepticus).